Reading from the N-terminus, the 370-residue chain is Seipin (370 aa).

The signal sequence occupies residues 1–18 (MNILLRLIVFALDPLGLG). At 19–55 (RRFLIRPAVNLGWNVYDRVRSKADEKVGTVRELVLRL) the chain is on the cytoplasmic side. A helical transmembrane segment spans residues 56-76 (GLIAFAVVLIIWLAVFMYAAF). The Lumenal portion of the chain corresponds to 77-251 (YYVYMPAISH…GLRYIMFNWP (175 aa)). Residues 252–272 (VLSAIVAISTNLFFILVVFLL) form a helical membrane-spanning segment. Topologically, residues 273 to 370 (SWYHWSDAKW…RPTKKTTADH (98 aa)) are cytoplasmic. The segment at 346–370 (KSRSGKRESPDALRKRPTKKTTADH) is disordered. Residues 350–359 (GKRESPDALR) show a composition bias toward basic and acidic residues.

In terms of tissue distribution, widely expressed, with highest levels detected in fat body, moderate levels detected in salivary gland, midgut and muscle, and weak expression detected in brain.

Its subcellular location is the endoplasmic reticulum membrane. It is found in the lipid droplet. In terms of biological role, acts as a tissue-autonomous lipid modulator, preventing ectopic lipid accumulation in salivary gland (a non-adipose tissue) and in promoting lipid storage in fat tissue. Required for the growth and maturation of small nascent lipid droplets (LDs) into larger mature LDs. The chain is Seipin from Drosophila melanogaster (Fruit fly).